An 80-amino-acid chain; its full sequence is Small pacifastin protease inhibitor (80 aa).

The N-terminal stretch at 1–24 is a signal peptide; that stretch reads MSKVLKVGLLLLLVAVAASAYAVA. A propeptide spanning residues 25-47 is cleaved from the precursor; sequence EENGAPKENKQLPQIDDYGVTNK. In terms of domain architecture, Pacifastin spans 45 to 80; that stretch reads TNKCPANQPFKWNCNYCTCGPEGKDASCTRMACPQH. 3 cysteine pairs are disulfide-bonded: C48–C63, C58–C77, and C61–C72.

Belongs to the protease inhibitor I19 family. Expressed in the venom apparatus. Low transcript levels are also detected in other tissues.

Its subcellular location is the secreted. Parasitic wasp protein that may interfere with the host immune response. The recombinant protein inhibits trypsin activity and prophenoloxidase (PPO) activation, an enzyme essential for both clotting and insect innate immune responses. It does not inhibit activity of chymotrypsin and protease K, and has no effect on phenoloxidase (PO) activity. The protein is Small pacifastin protease inhibitor of Nasonia vitripennis (Parasitic wasp).